Reading from the N-terminus, the 88-residue chain is UPF0297 protein EAT1b_2723 (88 aa).

This sequence belongs to the UPF0297 family.

This Exiguobacterium sp. (strain ATCC BAA-1283 / AT1b) protein is UPF0297 protein EAT1b_2723.